Reading from the N-terminus, the 276-residue chain is F-box/LRR-repeat protein 20 (276 aa).

An F-box domain is found at 22 to 68 (AVINKKLPKELLLRIFSFLDVVTLCRCAQVSRAWNVLALDGSNWQRI). LRR repeat units lie at residues 74–100 (QRDI…SLRG), 101–126 (CLGV…SLNG), 127–152 (CTKT…DLAS), 153–178 (CTSI…NISW), 179–204 (CDQV…FLKG), 205–230 (CTQL…NLQT), 231–256 (CLQI…CASG), and 257–276 (CSNI…PRLR).

In terms of assembly, interacts with SKP1 and CUL1. In terms of tissue distribution, widely expressed, with highest expression in skeletal muscle, heart and brain.

It is found in the cytoplasm. Functionally, substrate-recognition component of the SCF (SKP1-CUL1-F-box protein)-type E3 ubiquitin ligase complex. Role in neural transmission. In Rattus norvegicus (Rat), this protein is F-box/LRR-repeat protein 20 (Fbxl20).